The following is a 230-amino-acid chain: Small ribosomal subunit protein uS3 (230 aa).

The KH type-2 domain occupies 39 to 107 (VRNYLRQKLA…PIHVNIEEIR (69 aa)). The interval 210 to 230 (SSKPEHESKQRKAGRRNAAAN) is disordered.

The protein belongs to the universal ribosomal protein uS3 family. Part of the 30S ribosomal subunit. Forms a tight complex with proteins S10 and S14.

Its function is as follows. Binds the lower part of the 30S subunit head. Binds mRNA in the 70S ribosome, positioning it for translation. This Neisseria gonorrhoeae (strain ATCC 700825 / FA 1090) protein is Small ribosomal subunit protein uS3.